The following is a 334-amino-acid chain: Holliday junction branch migration complex subunit RuvB (334 aa).

The tract at residues 4–184 (ADRLISAGVI…FGIVQRLEFY (181 aa)) is large ATPase domain (RuvB-L). Residues I23, R24, G65, K68, T69, T70, 131–133 (EDY), R174, Y184, and R221 contribute to the ATP site. T69 is a Mg(2+) binding site. The tract at residues 185-255 (QVADLEHIVS…VAMKALDMLN (71 aa)) is small ATPAse domain (RuvB-S). A head domain (RuvB-H) region spans residues 258–334 (AEGFDFMDRK…YKHFGITREE (77 aa)). DNA contacts are provided by R294, R313, and R318.

This sequence belongs to the RuvB family. Homohexamer. Forms an RuvA(8)-RuvB(12)-Holliday junction (HJ) complex. HJ DNA is sandwiched between 2 RuvA tetramers; dsDNA enters through RuvA and exits via RuvB. An RuvB hexamer assembles on each DNA strand where it exits the tetramer. Each RuvB hexamer is contacted by two RuvA subunits (via domain III) on 2 adjacent RuvB subunits; this complex drives branch migration. In the full resolvosome a probable DNA-RuvA(4)-RuvB(12)-RuvC(2) complex forms which resolves the HJ.

The protein resides in the cytoplasm. The enzyme catalyses ATP + H2O = ADP + phosphate + H(+). Functionally, the RuvA-RuvB-RuvC complex processes Holliday junction (HJ) DNA during genetic recombination and DNA repair, while the RuvA-RuvB complex plays an important role in the rescue of blocked DNA replication forks via replication fork reversal (RFR). RuvA specifically binds to HJ cruciform DNA, conferring on it an open structure. The RuvB hexamer acts as an ATP-dependent pump, pulling dsDNA into and through the RuvAB complex. RuvB forms 2 homohexamers on either side of HJ DNA bound by 1 or 2 RuvA tetramers; 4 subunits per hexamer contact DNA at a time. Coordinated motions by a converter formed by DNA-disengaged RuvB subunits stimulates ATP hydrolysis and nucleotide exchange. Immobilization of the converter enables RuvB to convert the ATP-contained energy into a lever motion, pulling 2 nucleotides of DNA out of the RuvA tetramer per ATP hydrolyzed, thus driving DNA branch migration. The RuvB motors rotate together with the DNA substrate, which together with the progressing nucleotide cycle form the mechanistic basis for DNA recombination by continuous HJ branch migration. Branch migration allows RuvC to scan DNA until it finds its consensus sequence, where it cleaves and resolves cruciform DNA. The protein is Holliday junction branch migration complex subunit RuvB of Yersinia enterocolitica serotype O:8 / biotype 1B (strain NCTC 13174 / 8081).